The following is an 865-amino-acid chain: Probable beta-glucosidase J (865 aa).

Residue D233 is part of the active site. N330, N447, N503, and N764 each carry an N-linked (GlcNAc...) asparagine glycan. One can recognise a PA14 domain in the interval 411–579 (TGQPGYTFRV…DTDTAIQQAV (169 aa)).

Belongs to the glycosyl hydrolase 3 family.

The protein resides in the secreted. It catalyses the reaction Hydrolysis of terminal, non-reducing beta-D-glucosyl residues with release of beta-D-glucose.. It participates in glycan metabolism; cellulose degradation. Functionally, beta-glucosidases are one of a number of cellulolytic enzymes involved in the degradation of cellulosic biomass. Catalyzes the last step releasing glucose from the inhibitory cellobiose. The polypeptide is Probable beta-glucosidase J (bglJ) (Aspergillus fumigatus (strain CBS 144.89 / FGSC A1163 / CEA10) (Neosartorya fumigata)).